A 186-amino-acid polypeptide reads, in one-letter code: Napin embryo-specific (186 aa).

An N-terminal signal peptide occupies residues 1–21 (MANKLFLVSATLALFFLLTNA). 2 propeptides span residues 22-38 (SVYR…ATNP) and 77-97 (PSWT…QQQG).

This sequence belongs to the 2S seed storage albumins family. In terms of assembly, the mature protein consists of a small and a large chain linked by disulfide bonds. In terms of tissue distribution, cotyledons and the axis.

The small, basic, water-soluble napins are one of the two major kinds of storage proteins synthesized in the seed during its maturation. This chain is Napin embryo-specific, found in Brassica napus (Rape).